Here is a 469-residue protein sequence, read N- to C-terminus: Argininosuccinate lyase (469 aa).

This sequence belongs to the lyase 1 family. Argininosuccinate lyase subfamily.

It is found in the cytoplasm. The enzyme catalyses 2-(N(omega)-L-arginino)succinate = fumarate + L-arginine. It participates in amino-acid biosynthesis; L-arginine biosynthesis; L-arginine from L-ornithine and carbamoyl phosphate: step 3/3. This Burkholderia lata (strain ATCC 17760 / DSM 23089 / LMG 22485 / NCIMB 9086 / R18194 / 383) protein is Argininosuccinate lyase.